The following is a 226-amino-acid chain: Ribose-5-phosphate isomerase A (226 aa).

Substrate contacts are provided by residues 28–31, 83–86, and 97–100; these read TGST, DGAD, and KGGG. Glutamate 106 functions as the Proton acceptor in the catalytic mechanism. Lysine 124 contributes to the substrate binding site.

The protein belongs to the ribose 5-phosphate isomerase family. Homotetramer.

It catalyses the reaction aldehydo-D-ribose 5-phosphate = D-ribulose 5-phosphate. It functions in the pathway carbohydrate biosynthesis; D-ribose 5-phosphate biosynthesis. Functionally, catalyzes the reversible conversion of ribose-5-phosphate to ribulose 5-phosphate. In Methanocaldococcus jannaschii (strain ATCC 43067 / DSM 2661 / JAL-1 / JCM 10045 / NBRC 100440) (Methanococcus jannaschii), this protein is Ribose-5-phosphate isomerase A.